We begin with the raw amino-acid sequence, 138 residues long: Hydrogenase maturation factor HypA (138 aa).

Ni(2+) is bound at residue H2. Zn(2+) contacts are provided by C73, C76, C110, and C113.

This sequence belongs to the HypA/HybF family.

Functionally, involved in the maturation of [NiFe] hydrogenases. Required for nickel insertion into the metal center of the hydrogenase. The chain is Hydrogenase maturation factor HypA from Thermococcus sibiricus (strain DSM 12597 / MM 739).